Consider the following 507-residue polypeptide: Beta-Ala-His dipeptidase (507 aa).

Residues 1–26 form the signal peptide; it reads MDPKLGRMAASLLAVLLLLLERGMFS. Histidine 132 contributes to the Zn(2+) binding site. The active site involves aspartate 134. Aspartate 165 is a binding site for Zn(2+). Catalysis depends on glutamate 199, which acts as the Proton acceptor. Zn(2+) is bound at residue glutamate 200. Serine 219 carries the post-translational modification Phosphoserine. A Zn(2+)-binding site is contributed by aspartate 228. N-linked (GlcNAc...) asparagine glycans are attached at residues asparagine 322 and asparagine 382. Histidine 478 is a binding site for Zn(2+).

The protein belongs to the peptidase M20A family. Homodimer. The cofactor is Zn(2+). In terms of tissue distribution, found in serum and adult nervous central system. Absent in serum from patients with homocarnosinosis.

Its subcellular location is the secreted. The catalysed reaction is Preferential hydrolysis of the beta-Ala-|-His dipeptide (carnosine), and also anserine, Xaa-|-His dipeptides and other dipeptides including homocarnosine.. The enzyme catalyses carnosine + H2O = beta-alanine + L-histidine. It carries out the reaction anserine + H2O = N(pros)-methyl-L-histidine + beta-alanine. It catalyses the reaction L-alanyl-L-histidine + H2O = L-histidine + L-alanine. The catalysed reaction is glycyl-L-histidine + H2O = L-histidine + glycine. The enzyme catalyses L-homocarnosine + H2O = 4-aminobutanoate + L-histidine. Activated by cadmium ions. Inhibited by the metal chelator 1,10-o-phenantrolin. The inhibitory concentration 50% (IC(50)) is 5 uM. Its function is as follows. Catalyzes the peptide bond hydrolysis in Xaa-His dipeptides, displaying the highest activity toward carnosine (beta-alanyl-L-histidine) and anserine (beta-alanyl-3-methyl-histidine). The polypeptide is Beta-Ala-His dipeptidase (Homo sapiens (Human)).